The sequence spans 331 residues: Beta-ketoacyl-[acyl-carrier-protein] synthase III (331 aa).

Catalysis depends on residues C115 and H255. Residues 256–260 (QANFR) are ACP-binding. N285 is a catalytic residue.

It belongs to the thiolase-like superfamily. FabH family. Homodimer.

It localises to the cytoplasm. It carries out the reaction malonyl-[ACP] + acetyl-CoA + H(+) = 3-oxobutanoyl-[ACP] + CO2 + CoA. It functions in the pathway lipid metabolism; fatty acid biosynthesis. Catalyzes the condensation reaction of fatty acid synthesis by the addition to an acyl acceptor of two carbons from malonyl-ACP. Catalyzes the first condensation reaction which initiates fatty acid synthesis and may therefore play a role in governing the total rate of fatty acid production. Possesses both acetoacetyl-ACP synthase and acetyl transacylase activities. Its substrate specificity determines the biosynthesis of branched-chain and/or straight-chain of fatty acids. This chain is Beta-ketoacyl-[acyl-carrier-protein] synthase III, found in Helicobacter pylori (strain J99 / ATCC 700824) (Campylobacter pylori J99).